Consider the following 458-residue polypeptide: Argininosuccinate lyase (458 aa).

The protein belongs to the lyase 1 family. Argininosuccinate lyase subfamily.

It localises to the cytoplasm. The catalysed reaction is 2-(N(omega)-L-arginino)succinate = fumarate + L-arginine. The protein operates within amino-acid biosynthesis; L-arginine biosynthesis; L-arginine from L-ornithine and carbamoyl phosphate: step 3/3. This Neisseria gonorrhoeae (strain ATCC 700825 / FA 1090) protein is Argininosuccinate lyase.